The sequence spans 1104 residues: Translation initiation factor IF-2 (1104 aa).

Disordered regions lie at residues 51–444 (SLLG…LAAQ) and 461–497 (LARP…RRRA). Low complexity-rich tracts occupy residues 60–119 (AKPA…KPQA) and 127–164 (ATPK…AAKP). A compositionally biased stretch (pro residues) spans 189-202 (APTPRPTPARPTPR). Low complexity-rich tracts occupy residues 203–215 (PAGA…PTPG), 227–246 (GAPS…KPGA), 311–336 (STTG…PAGM), and 366–396 (PTKA…SFRP). The segment covering 406 to 420 (GRPDWDDSARLDALR) has biased composition (basic and acidic residues). Positions 481-495 (MRKRKKETARQRQRR) are enriched in basic residues. The 173-residue stretch at 596-768 (RRPPVVTVMG…LLLVTEVEDL (173 aa)) folds into the tr-type G domain. Residues 605–612 (GHVDHGKT) are G1. 605 to 612 (GHVDHGKT) contributes to the GTP binding site. The G2 stretch occupies residues 630 to 634 (GITQH). Positions 655–658 (DTPG) are G3. GTP contacts are provided by residues 655 to 659 (DTPGH) and 709 to 712 (NKID). Residues 709 to 712 (NKID) are G4. A G5 region spans residues 745 to 747 (SAI).

This sequence belongs to the TRAFAC class translation factor GTPase superfamily. Classic translation factor GTPase family. IF-2 subfamily.

Its subcellular location is the cytoplasm. Its function is as follows. One of the essential components for the initiation of protein synthesis. Protects formylmethionyl-tRNA from spontaneous hydrolysis and promotes its binding to the 30S ribosomal subunits. Also involved in the hydrolysis of GTP during the formation of the 70S ribosomal complex. This chain is Translation initiation factor IF-2, found in Synechococcus sp. (strain CC9605).